Consider the following 477-residue polypeptide: Glycogen synthase (477 aa).

K15 provides a ligand contact to ADP-alpha-D-glucose.

Belongs to the glycosyltransferase 1 family. Bacterial/plant glycogen synthase subfamily.

The enzyme catalyses [(1-&gt;4)-alpha-D-glucosyl](n) + ADP-alpha-D-glucose = [(1-&gt;4)-alpha-D-glucosyl](n+1) + ADP + H(+). It participates in glycan biosynthesis; glycogen biosynthesis. Its function is as follows. Synthesizes alpha-1,4-glucan chains using ADP-glucose. This Streptococcus pneumoniae serotype 2 (strain D39 / NCTC 7466) protein is Glycogen synthase.